The primary structure comprises 677 residues: MQLSSLSHTSITHKDKKKKMGIELQNHQSHHEEASPAEEPMSRWLINTPEPPSMWQELIGYIRTNVLAKKKHKRNKTKNSSSNLVYSCLKSAFPILSWGRQYKLNLFKKDLMAGLTLASLCIPQSIGYANLAGLDPEYGLYTSVVPPLIYSTMGTSRELAIGPVAVVSLLLSSMVRDLQDPVTDPIAYRKIVFTVTFFAGAFQAIFGLFRLGFLVDFLSHAALVGFMAGAAIVIGLQQLKGLFGLTHFTNKTDVVSVLSSVFHSLHHPWQPLNFVIGSSFLIFILLARFIGKRNNKLFWIPAMAPLISVVLATLIVYLSNAESRGVKIVKHIKPGFNQLSVNQLQFKSPHLGQIAKIGLISAIIALTEAIAVGRSFATIKGYRLDGNKEMMAMGFMNIAGSLSSCYVATGSFSRTAVNFSAGCETVVSNIVMAITVMISLEVLTRFLYFTPTAILASIILSALPGLIDVSGALHIWKLDKLDFLVLIAAFFGVLFASVEIGLLLAVGISFARIMLSSIRPSIEALGRLSKTDIFGDINQYPMANKTAGLLTLRISSPLLCFANANFIRDRILNSVQEIEGEENEQEVLKENGLQVVILDMSCVMGVDTSGVFALEELHQELASNDIRLVIASPRWRVLHKLKRAKLDEKIKTENIYMTVGEAVDIYVRARSTSHELC.

Residues 1–110 lie on the Cytoplasmic side of the membrane; sequence MQLSSLSHTS…QYKLNLFKKD (110 aa). A helical membrane pass occupies residues 111 to 131; it reads LMAGLTLASLCIPQSIGYANL. Over 132–133 the chain is Extracellular; that stretch reads AG. A helical membrane pass occupies residues 134-154; that stretch reads LDPEYGLYTSVVPPLIYSTMG. At 155–158 the chain is on the cytoplasmic side; the sequence is TSRE. A helical membrane pass occupies residues 159–179; that stretch reads LAIGPVAVVSLLLSSMVRDLQ. Over 180-190 the chain is Extracellular; the sequence is DPVTDPIAYRK. The chain crosses the membrane as a helical span at residues 191-211; sequence IVFTVTFFAGAFQAIFGLFRL. Topologically, residues 212–213 are cytoplasmic; the sequence is GF. Residues 214-234 form a helical membrane-spanning segment; that stretch reads LVDFLSHAALVGFMAGAAIVI. The Extracellular portion of the chain corresponds to 235 to 270; sequence GLQQLKGLFGLTHFTNKTDVVSVLSSVFHSLHHPWQ. Residue asparagine 250 is glycosylated (N-linked (GlcNAc...) asparagine). Residues 271 to 291 form a helical membrane-spanning segment; the sequence is PLNFVIGSSFLIFILLARFIG. Topologically, residues 292–296 are cytoplasmic; that stretch reads KRNNK. A helical transmembrane segment spans residues 297-317; the sequence is LFWIPAMAPLISVVLATLIVY. Over 318–352 the chain is Extracellular; the sequence is LSNAESRGVKIVKHIKPGFNQLSVNQLQFKSPHLG. Residues 353-373 traverse the membrane as a helical segment; that stretch reads QIAKIGLISAIIALTEAIAVG. At 374–389 the chain is on the cytoplasmic side; the sequence is RSFATIKGYRLDGNKE. Residues 390–410 traverse the membrane as a helical segment; it reads MMAMGFMNIAGSLSSCYVATG. Residues 411–422 lie on the Extracellular side of the membrane; it reads SFSRTAVNFSAG. N-linked (GlcNAc...) asparagine glycosylation is present at asparagine 418. Residues 423 to 443 traverse the membrane as a helical segment; it reads CETVVSNIVMAITVMISLEVL. Over 444–446 the chain is Cytoplasmic; that stretch reads TRF. The helical transmembrane segment at 447 to 467 threads the bilayer; that stretch reads LYFTPTAILASIILSALPGLI. Residues 468–482 lie on the Extracellular side of the membrane; that stretch reads DVSGALHIWKLDKLD. A helical membrane pass occupies residues 483–503; that stretch reads FLVLIAAFFGVLFASVEIGLL. The Cytoplasmic segment spans residues 504 to 677; the sequence is LAVGISFARI…RARSTSHELC (174 aa). The STAS domain occupies 540–666; it reads YPMANKTAGL…MTVGEAVDIY (127 aa).

It belongs to the SLC26A/SulP transporter (TC 2.A.53) family. In terms of tissue distribution, expressed in the phloem in roots and in the phloem of vascular bundles in leaves.

The protein resides in the membrane. Its function is as follows. Low-affinity H(+)/sulfate cotransporter that may be involved in the distribution of sulfate from vascular bundles to the palisade cells of the leaves. Plays a central role in the regulation of sulfate assimilation. The sequence is that of Sulfate transporter 2.2 (SULTR2;2) from Arabidopsis thaliana (Mouse-ear cress).